A 796-amino-acid chain; its full sequence is Lon protease (796 aa).

Residues 19 to 213 enclose the Lon N-terminal domain; it reads LPVVVTRGIF…LLKELIINRP (195 aa). 376–383 provides a ligand contact to ATP; the sequence is GPPGVGKT. Positions 612-793 constitute a Lon proteolytic domain; the sequence is ESQVGVVTGL…EDVYEIIFKN (182 aa). Catalysis depends on residues Ser699 and Lys742.

Belongs to the peptidase S16 family. In terms of assembly, homohexamer. Organized in a ring with a central cavity.

The protein resides in the cytoplasm. The catalysed reaction is Hydrolysis of proteins in presence of ATP.. ATP-dependent serine protease that mediates the selective degradation of mutant and abnormal proteins as well as certain short-lived regulatory proteins. Required for cellular homeostasis and for survival from DNA damage and developmental changes induced by stress. Degrades polypeptides processively to yield small peptide fragments that are 5 to 10 amino acids long. Binds to DNA in a double-stranded, site-specific manner. The polypeptide is Lon protease (Mycoplasma mycoides subsp. mycoides SC (strain CCUG 32753 / NCTC 10114 / PG1)).